The chain runs to 220 residues: Cytidylate kinase (220 aa).

9–17 serves as a coordination point for ATP; it reads GPAASGKST.

The protein belongs to the cytidylate kinase family. Type 1 subfamily.

The protein localises to the cytoplasm. The catalysed reaction is CMP + ATP = CDP + ADP. The enzyme catalyses dCMP + ATP = dCDP + ADP. The polypeptide is Cytidylate kinase (Thermotoga sp. (strain RQ2)).